The primary structure comprises 106 residues: Small ribosomal subunit protein uS10 (106 aa).

This sequence belongs to the universal ribosomal protein uS10 family. As to quaternary structure, part of the 30S ribosomal subunit.

Involved in the binding of tRNA to the ribosomes. This is Small ribosomal subunit protein uS10 from Archaeoglobus fulgidus (strain ATCC 49558 / DSM 4304 / JCM 9628 / NBRC 100126 / VC-16).